Here is a 273-residue protein sequence, read N- to C-terminus: Energy-coupling factor transporter ATP-binding protein EcfA (273 aa).

In terms of domain architecture, ABC transporter spans 2–237 (ISIRDLTYFY…RASLLALGLA (236 aa)). 36–43 (GRNGSGKS) contributes to the ATP binding site.

The protein belongs to the ABC transporter superfamily. Energy-coupling factor EcfA family. In terms of assembly, forms a stable energy-coupling factor (ECF) transporter complex composed of 2 membrane-embedded substrate-binding proteins (S component), 2 ATP-binding proteins (A component) and 2 transmembrane proteins (T component).

Its subcellular location is the cell membrane. ATP-binding (A) component of a common energy-coupling factor (ECF) ABC-transporter complex. Unlike classic ABC transporters this ECF transporter provides the energy necessary to transport a number of different substrates. In Syntrophomonas wolfei subsp. wolfei (strain DSM 2245B / Goettingen), this protein is Energy-coupling factor transporter ATP-binding protein EcfA.